The sequence spans 662 residues: Glycogen debranching enzyme (662 aa).

D338 functions as the Nucleophile in the catalytic mechanism. E373 functions as the Proton donor in the catalytic mechanism.

This sequence belongs to the glycosyl hydrolase 13 family.

It catalyses the reaction Hydrolysis of (1-&gt;6)-alpha-D-glucosidic linkages to branches with degrees of polymerization of three or four glucose residues in limit dextrin.. Its pathway is glycan degradation; glycogen degradation. Its function is as follows. Removes maltotriose and maltotetraose chains that are attached by 1,6-alpha-linkage to the limit dextrin main chain, generating a debranched limit dextrin. The polypeptide is Glycogen debranching enzyme (Yersinia pseudotuberculosis serotype IB (strain PB1/+)).